Here is a 210-residue protein sequence, read N- to C-terminus: Large ribosomal subunit protein uL3 (210 aa).

Belongs to the universal ribosomal protein uL3 family. In terms of assembly, part of the 50S ribosomal subunit. Forms a cluster with proteins L14 and L19.

Its function is as follows. One of the primary rRNA binding proteins, it binds directly near the 3'-end of the 23S rRNA, where it nucleates assembly of the 50S subunit. The protein is Large ribosomal subunit protein uL3 of Syntrophotalea carbinolica (strain DSM 2380 / NBRC 103641 / GraBd1) (Pelobacter carbinolicus).